Reading from the N-terminus, the 476-residue chain is Sulfate adenylyltransferase subunit 1 (476 aa).

Residues 24–238 form the tr-type G domain; sequence KSLLRFLTCG…ELLEYVDIDR (215 aa). The G1 stretch occupies residues 33 to 40; sequence GSVDDGKS. Residue 33–40 coordinates GTP; that stretch reads GSVDDGKS. Residues 91–95 are G2; that stretch reads GITID. The segment at 112–115 is G3; the sequence is DTPG. GTP-binding positions include 112-116 and 167-170; these read DTPGH and NKMD. Positions 167–170 are G4; it reads NKMD. Residues 205–207 form a G5 region; it reads SAL.

The protein belongs to the TRAFAC class translation factor GTPase superfamily. Classic translation factor GTPase family. CysN/NodQ subfamily. Heterodimer composed of CysD, the smaller subunit, and CysN.

The enzyme catalyses sulfate + ATP + H(+) = adenosine 5'-phosphosulfate + diphosphate. The protein operates within sulfur metabolism; hydrogen sulfide biosynthesis; sulfite from sulfate: step 1/3. In terms of biological role, with CysD forms the ATP sulfurylase (ATPS) that catalyzes the adenylation of sulfate producing adenosine 5'-phosphosulfate (APS) and diphosphate, the first enzymatic step in sulfur assimilation pathway. APS synthesis involves the formation of a high-energy phosphoric-sulfuric acid anhydride bond driven by GTP hydrolysis by CysN coupled to ATP hydrolysis by CysD. The polypeptide is Sulfate adenylyltransferase subunit 1 (Vibrio cholerae serotype O1 (strain M66-2)).